A 306-amino-acid chain; its full sequence is Glutathione transport system permease protein GsiC (306 aa).

Topologically, residues 1–8 (MLNYVIKR) are cytoplasmic. A helical transmembrane segment spans residues 9–29 (LLGLIPTLFIVSVLVFLFVHM). Residues 30-102 (LPGDPARLIA…SRFMPTLWLT (73 aa)) are Periplasmic-facing. The ABC transmembrane type-1 domain maps to 95 to 292 (FMPTLWLTIT…LEFILINLVV (198 aa)). The chain crosses the membrane as a helical span at residues 103 to 123 (ITSMVWAVIFGMAAGIIAAVW). Over 124 to 134 (RNRWPDRLSMT) the chain is Cytoplasmic. Residues 135 to 155 (IAVSGISFPAFALGMLLIQVF) traverse the membrane as a helical segment. The Periplasmic portion of the chain corresponds to 156–168 (SVELGWLPTVGAD). Residues 169 to 189 (SWQHYILPSLTLGAAVAAVMA) form a helical membrane-spanning segment. At 190-228 (RFTRASFVDVLSEDYMRTARAKGVSETWVVLKHGLRNAM) the chain is on the cytoplasmic side. Residues 229–249 (IPVVTMMGLQFGFLLGGSIVV) form a helical membrane-spanning segment. Over 250–277 (EKVFNWPGLGRLLVDSVEMRDYPVIQAE) the chain is Periplasmic. A helical membrane pass occupies residues 278–298 (ILLFSLEFILINLVVDVLYAA). Over 299-306 (INPAIRYK) the chain is Cytoplasmic.

The protein belongs to the binding-protein-dependent transport system permease family. In terms of assembly, the complex is composed of two ATP-binding proteins (GsiA), two transmembrane proteins (GsiC and GsiD) and a solute-binding protein (GsiB).

Its subcellular location is the cell inner membrane. Part of the ABC transporter complex GsiABCD involved in glutathione import. Probably responsible for the translocation of the substrate across the membrane. The protein is Glutathione transport system permease protein GsiC of Escherichia coli O6:H1 (strain CFT073 / ATCC 700928 / UPEC).